Reading from the N-terminus, the 586-residue chain is Phosphomethylpyrimidine synthase (586 aa).

Positions 1–58 (MKQSVSAEQIELKSSLPGSKKVYVDGTREGMKVPMREIEQSDTNGVQNPPIRVYDTSG) are disordered. Over residues 22-39 (VYVDGTREGMKVPMREIE) the composition is skewed to basic and acidic residues. Substrate is bound by residues N193, M222, Y251, H287, 307-309 (SRG), 348-351 (DGLR), and E387. H391 lines the Zn(2+) pocket. Y414 contributes to the substrate binding site. Residue H455 coordinates Zn(2+). [4Fe-4S] cluster-binding residues include C535, C538, and C543.

It belongs to the ThiC family. Requires [4Fe-4S] cluster as cofactor.

It catalyses the reaction 5-amino-1-(5-phospho-beta-D-ribosyl)imidazole + S-adenosyl-L-methionine = 4-amino-2-methyl-5-(phosphooxymethyl)pyrimidine + CO + 5'-deoxyadenosine + formate + L-methionine + 3 H(+). The protein operates within cofactor biosynthesis; thiamine diphosphate biosynthesis. Catalyzes the synthesis of the hydroxymethylpyrimidine phosphate (HMP-P) moiety of thiamine from aminoimidazole ribotide (AIR) in a radical S-adenosyl-L-methionine (SAM)-dependent reaction. The protein is Phosphomethylpyrimidine synthase of Bacillus mycoides (strain KBAB4) (Bacillus weihenstephanensis).